Reading from the N-terminus, the 269-residue chain is Probable ribosomal RNA small subunit methyltransferase A (269 aa).

S-adenosyl-L-methionine contacts are provided by His19, Leu21, Gly46, Glu67, Asp92, and Asn107.

The protein belongs to the class I-like SAM-binding methyltransferase superfamily. rRNA adenine N(6)-methyltransferase family. RsmA subfamily.

The protein localises to the cytoplasm. In terms of biological role, specifically dimethylates two adjacent adenosines in the loop of a conserved hairpin near the 3'-end of 16S rRNA in the 30S particle. May play a critical role in biogenesis of 30S subunits. The chain is Probable ribosomal RNA small subunit methyltransferase A from Methanosarcina acetivorans (strain ATCC 35395 / DSM 2834 / JCM 12185 / C2A).